The sequence spans 224 residues: LexA repressor (224 aa).

A DNA-binding region (H-T-H motif) is located at residues 38 to 58 (IREIGDAVGLTSTSSVAHQLR). Residues 71 to 82 (NRPRAVDVRGID) show a composition bias toward basic and acidic residues. The tract at residues 71 to 96 (NRPRAVDVRGIDDAGTPSATTDVIGS) is disordered. Active-site for autocatalytic cleavage activity residues include serine 148 and lysine 185.

This sequence belongs to the peptidase S24 family. Homodimer.

The enzyme catalyses Hydrolysis of Ala-|-Gly bond in repressor LexA.. Its function is as follows. Represses a number of genes involved in the response to DNA damage (SOS response), including recA and lexA. In the presence of single-stranded DNA, RecA interacts with LexA causing an autocatalytic cleavage which disrupts the DNA-binding part of LexA, leading to derepression of the SOS regulon and eventually DNA repair. This is LexA repressor from Mycobacteroides abscessus (strain ATCC 19977 / DSM 44196 / CCUG 20993 / CIP 104536 / JCM 13569 / NCTC 13031 / TMC 1543 / L948) (Mycobacterium abscessus).